We begin with the raw amino-acid sequence, 178 residues long: Large ribosomal subunit protein uL13m (178 aa).

This sequence belongs to the universal ribosomal protein uL13 family. Component of the mitochondrial ribosome large subunit (39S) which comprises a 16S rRNA and about 50 distinct proteins. Interacts with OXA1L.

It localises to the mitochondrion. The chain is Large ribosomal subunit protein uL13m (MRPL13) from Bos taurus (Bovine).